The chain runs to 405 residues: Intraflagellar transport protein 57 homolog (405 aa).

Residues 252–380 (ETLKTNILEN…AQLNLEVALL (129 aa)) are a coiled coil.

Belongs to the IFT57 family.

It is found in the cytoplasm. Its subcellular location is the cytoskeleton. It localises to the cilium basal body. In terms of biological role, required for the formation of cilia. The protein is Intraflagellar transport protein 57 homolog of Drosophila melanogaster (Fruit fly).